Reading from the N-terminus, the 92-residue chain is Movement protein (92 aa).

The helical transmembrane segment at 38–58 threads the bilayer; it reads VIALVVILVSVGVFYLAYTLF.

It belongs to the mastrevirus movement protein family. Interacts with the capsid protein (CP). Part of a MP-CP-viral DNA complex.

It localises to the host membrane. Functionally, involved in the viral transport within, and between cells. The protein is Movement protein of Phaseolus vulgaris (Kidney bean).